The sequence spans 434 residues: MSILKIFAREIFDSRGNPTVEVDLYTSKGLFRAAVPSGASTGIYEALELRDNDKTRFLGKGVSKAVGHVNKTIAPALISKNINVVEQEKIDKLMLEMDGSENKSKFGANAILGVSLAVCKAGAAEKGVPLYRHIADLAGNPEVILPVPAFNVINGGSHAGNKLAMQEFMILPVGAESFKEAMRIGAEVYHNLKNVIKEKYGKDATNVGDEGGFAPNILEDKEALELLKTAISKAGYTDKVVIGMDVAASEFYRDGKYDLDFKSPDDPSRYITPDQLADLYKSFIKSYPLVSVEDPFDQDDWSAWKKFTATVGVQVVGDDLTVTNPKRIAKPVEEKSCNCLLLQVNQIGSVTESLQACKLAQSNGWGVMVSHRSGETEDTFIADLVVGLCTGQIKTGAPCRSERLAKYNQLLRIEEELGSKARFAGRNFRNPRIN.

Serine 40 contacts Mg(2+). Positions 158 and 167 each coordinate substrate. Catalysis depends on glutamate 210, which acts as the Proton donor. Aspartate 245, glutamate 293, and aspartate 318 together coordinate Mg(2+). Substrate-binding positions include glutamate 293, aspartate 318, 370 to 373 (SHRS), and lysine 394.

The protein belongs to the enolase family. As to quaternary structure, homodimer. Mg(2+) is required as a cofactor.

The protein resides in the cytoplasm. The enzyme catalyses (2R)-2-phosphoglycerate = phosphoenolpyruvate + H2O. The protein operates within carbohydrate degradation; glycolysis; pyruvate from D-glyceraldehyde 3-phosphate: step 4/5. In Trachemys scripta elegans (Red-eared slider turtle), this protein is Alpha-enolase.